A 344-amino-acid chain; its full sequence is Photosystem II protein D1 (344 aa).

Thr2 is subject to N-acetylthreonine. Thr2 carries the phosphothreonine modification. 3 helical membrane passes run 29-46 (YIGW…TATS), 118-133 (HFLL…EWEL), and 142-156 (WIAV…AATA). His118 provides a ligand contact to chlorophyll a. Tyr126 contacts pheophytin a. Residues Asp170 and Glu189 each contribute to the [CaMn4O5] cluster site. A helical transmembrane segment spans residues 197–218 (FHMLGVAGVFGGSLFSAMHGSL). His198 provides a ligand contact to chlorophyll a. Residues His215 and 264–265 (SF) each bind a quinone. Residue His215 participates in Fe cation binding. Residue His272 coordinates Fe cation. Residues 274–288 (FLAAWPVVCIWFTAL) traverse the membrane as a helical segment. [CaMn4O5] cluster contacts are provided by His332, Glu333, Asp342, and Ala344.

This sequence belongs to the reaction center PufL/M/PsbA/D family. As to quaternary structure, PSII is composed of 1 copy each of membrane proteins PsbA, PsbB, PsbC, PsbD, PsbE, PsbF, PsbH, PsbI, PsbJ, PsbK, PsbL, PsbM, PsbT, PsbX, PsbY, PsbZ, Psb30/Ycf12, at least 3 peripheral proteins of the oxygen-evolving complex and a large number of cofactors. It forms dimeric complexes. It depends on The D1/D2 heterodimer binds P680, chlorophylls that are the primary electron donor of PSII, and subsequent electron acceptors. It shares a non-heme iron and each subunit binds pheophytin, quinone, additional chlorophylls, carotenoids and lipids. D1 provides most of the ligands for the Mn4-Ca-O5 cluster of the oxygen-evolving complex (OEC). There is also a Cl(-1) ion associated with D1 and D2, which is required for oxygen evolution. The PSII complex binds additional chlorophylls, carotenoids and specific lipids. as a cofactor. In terms of processing, tyr-161 forms a radical intermediate that is referred to as redox-active TyrZ, YZ or Y-Z.

The protein resides in the plastid. Its subcellular location is the chloroplast thylakoid membrane. The enzyme catalyses 2 a plastoquinone + 4 hnu + 2 H2O = 2 a plastoquinol + O2. Its function is as follows. Photosystem II (PSII) is a light-driven water:plastoquinone oxidoreductase that uses light energy to abstract electrons from H(2)O, generating O(2) and a proton gradient subsequently used for ATP formation. It consists of a core antenna complex that captures photons, and an electron transfer chain that converts photonic excitation into a charge separation. The D1/D2 (PsbA/PsbD) reaction center heterodimer binds P680, the primary electron donor of PSII as well as several subsequent electron acceptors. The polypeptide is Photosystem II protein D1 (Staurastrum punctulatum (Green alga)).